The following is a 498-amino-acid chain: ATP synthase subunit beta, chloroplastic (498 aa).

Residue Gly172–Thr179 coordinates ATP.

It belongs to the ATPase alpha/beta chains family. In terms of assembly, F-type ATPases have 2 components, CF(1) - the catalytic core - and CF(0) - the membrane proton channel. CF(1) has five subunits: alpha(3), beta(3), gamma(1), delta(1), epsilon(1). CF(0) has four main subunits: a(1), b(1), b'(1) and c(9-12).

It localises to the plastid. The protein localises to the chloroplast thylakoid membrane. It carries out the reaction ATP + H2O + 4 H(+)(in) = ADP + phosphate + 5 H(+)(out). In terms of biological role, produces ATP from ADP in the presence of a proton gradient across the membrane. The catalytic sites are hosted primarily by the beta subunits. The polypeptide is ATP synthase subunit beta, chloroplastic (Morus indica (Mulberry)).